We begin with the raw amino-acid sequence, 475 residues long: SAM50-like protein SPAC17C9.06 (475 aa).

In terms of domain architecture, POTRA spans 44–130; that stretch reads VGISSIRVTG…LDVTIQVKEK (87 aa).

This sequence belongs to the SAM50/omp85 family. As to quaternary structure, associates with the mitochondrial contact site and cristae organizing system (MICOS) complex (also known as MINOS or MitOS complex).

It localises to the mitochondrion outer membrane. May be required for the assembly pathway of mitochondrial outer membrane proteins. This is SAM50-like protein SPAC17C9.06 from Schizosaccharomyces pombe (strain 972 / ATCC 24843) (Fission yeast).